The primary structure comprises 174 residues: Peptide deformylase (174 aa).

Fe cation contacts are provided by Cys96 and His138. Residue Glu139 is part of the active site. His142 serves as a coordination point for Fe cation.

Belongs to the polypeptide deformylase family. Fe(2+) is required as a cofactor.

The enzyme catalyses N-terminal N-formyl-L-methionyl-[peptide] + H2O = N-terminal L-methionyl-[peptide] + formate. Removes the formyl group from the N-terminal Met of newly synthesized proteins. Requires at least a dipeptide for an efficient rate of reaction. N-terminal L-methionine is a prerequisite for activity but the enzyme has broad specificity at other positions. This chain is Peptide deformylase, found in Helicobacter pylori (strain G27).